We begin with the raw amino-acid sequence, 126 residues long: Phosphoribosyl-AMP cyclohydrolase (126 aa).

Mg(2+) is bound at residue Asp-82. Position 83 (Cys-83) interacts with Zn(2+). Residues Asp-84 and Asp-86 each contribute to the Mg(2+) site. Zn(2+)-binding residues include Cys-99 and Cys-106.

It belongs to the PRA-CH family. In terms of assembly, homodimer. Requires Mg(2+) as cofactor. It depends on Zn(2+) as a cofactor.

The protein localises to the cytoplasm. It catalyses the reaction 1-(5-phospho-beta-D-ribosyl)-5'-AMP + H2O = 1-(5-phospho-beta-D-ribosyl)-5-[(5-phospho-beta-D-ribosylamino)methylideneamino]imidazole-4-carboxamide. Its pathway is amino-acid biosynthesis; L-histidine biosynthesis; L-histidine from 5-phospho-alpha-D-ribose 1-diphosphate: step 3/9. Catalyzes the hydrolysis of the adenine ring of phosphoribosyl-AMP. The sequence is that of Phosphoribosyl-AMP cyclohydrolase from Sphingopyxis alaskensis (strain DSM 13593 / LMG 18877 / RB2256) (Sphingomonas alaskensis).